Here is a 118-residue protein sequence, read N- to C-terminus: Large ribosomal subunit protein bL20 (118 aa).

Belongs to the bacterial ribosomal protein bL20 family.

Functionally, binds directly to 23S ribosomal RNA and is necessary for the in vitro assembly process of the 50S ribosomal subunit. It is not involved in the protein synthesizing functions of that subunit. The polypeptide is Large ribosomal subunit protein bL20 (Salmonella arizonae (strain ATCC BAA-731 / CDC346-86 / RSK2980)).